The following is a 334-amino-acid chain: Biotin synthase (334 aa).

The region spanning 54 to 281 is the Radical SAM core domain; sequence QAIQLSTLLS…KSYVRLSAGR (228 aa). [4Fe-4S] cluster contacts are provided by Cys-69, Cys-73, and Cys-76. [2Fe-2S] cluster-binding residues include Cys-113, Cys-144, Cys-204, and Arg-276.

It belongs to the radical SAM superfamily. Biotin synthase family. In terms of assembly, homodimer. It depends on [4Fe-4S] cluster as a cofactor. [2Fe-2S] cluster is required as a cofactor.

The enzyme catalyses (4R,5S)-dethiobiotin + (sulfur carrier)-SH + 2 reduced [2Fe-2S]-[ferredoxin] + 2 S-adenosyl-L-methionine = (sulfur carrier)-H + biotin + 2 5'-deoxyadenosine + 2 L-methionine + 2 oxidized [2Fe-2S]-[ferredoxin]. It functions in the pathway cofactor biosynthesis; biotin biosynthesis; biotin from 7,8-diaminononanoate: step 2/2. Functionally, catalyzes the conversion of dethiobiotin (DTB) to biotin by the insertion of a sulfur atom into dethiobiotin via a radical-based mechanism. In Haemophilus ducreyi (strain 35000HP / ATCC 700724), this protein is Biotin synthase.